The following is a 467-amino-acid chain: Ribulose bisphosphate carboxylase large chain (467 aa).

Lys5 is subject to N6,N6,N6-trimethyllysine. Substrate-binding residues include Asn114 and Thr164. Residue Lys166 is the Proton acceptor of the active site. Lys168 serves as a coordination point for substrate. Mg(2+) contacts are provided by Lys192, Asp194, and Glu195. Lys192 bears the N6-carboxylysine mark. Residue His285 is the Proton acceptor of the active site. Residues Arg286, His318, and Ser370 each contribute to the substrate site.

Belongs to the RuBisCO large chain family. Type I subfamily. In terms of assembly, heterohexadecamer of 8 large chains and 8 small chains; disulfide-linked. The disulfide link is formed within the large subunit homodimers. The cofactor is Mg(2+). Post-translationally, the disulfide bond which can form in the large chain dimeric partners within the hexadecamer appears to be associated with oxidative stress and protein turnover.

It is found in the plastid. The protein localises to the chloroplast. It catalyses the reaction 2 (2R)-3-phosphoglycerate + 2 H(+) = D-ribulose 1,5-bisphosphate + CO2 + H2O. It carries out the reaction D-ribulose 1,5-bisphosphate + O2 = 2-phosphoglycolate + (2R)-3-phosphoglycerate + 2 H(+). Its function is as follows. RuBisCO catalyzes two reactions: the carboxylation of D-ribulose 1,5-bisphosphate, the primary event in carbon dioxide fixation, as well as the oxidative fragmentation of the pentose substrate in the photorespiration process. Both reactions occur simultaneously and in competition at the same active site. The protein is Ribulose bisphosphate carboxylase large chain of Tasmannia insipida (Pepperbush).